The sequence spans 234 residues: Bromodomain-containing protein DDB_G0271118 (234 aa).

The Bromo domain maps to 1–60 (MDLGTIKGELDNNGYSTIKDFTADVRLMFENALTYNADSSPIWKHAKTLLYFHRKHDEHV). The span at 134 to 194 (NNNSNNNNNN…SSSSSSSSSS (61 aa)) shows a compositional bias: low complexity. Residues 134-209 (NNNSNNNNNN…KKYSDEERRN (76 aa)) form a disordered region.

The sequence is that of Bromodomain-containing protein DDB_G0271118 from Dictyostelium discoideum (Social amoeba).